Consider the following 459-residue polypeptide: Bifunctional protein GlmU (459 aa).

A pyrophosphorylase region spans residues 1–229; that stretch reads MSNYAIILAA…FDESLGVNDR (229 aa). Residues 8-11, Lys22, Gln72, and 77-78 each bind UDP-N-acetyl-alpha-D-glucosamine; these read LAAG and GT. Asp102 is a binding site for Mg(2+). UDP-N-acetyl-alpha-D-glucosamine-binding residues include Gly139, Glu154, Asn169, and Asn227. Asn227 contributes to the Mg(2+) binding site. The segment at 230–250 is linker; that stretch reads VALATAEKVMRHRIARQHMVN. The N-acetyltransferase stretch occupies residues 251-459; that stretch reads GVTVVNPDSA…NKKPHHPSQK (209 aa). The UDP-N-acetyl-alpha-D-glucosamine site is built by Arg332 and Lys350. His362 (proton acceptor) is an active-site residue. Residues Tyr365 and Asn376 each coordinate UDP-N-acetyl-alpha-D-glucosamine. Residues Ala379, 385–386, Ser404, Ala422, and Arg439 contribute to the acetyl-CoA site; that span reads NY.

It in the N-terminal section; belongs to the N-acetylglucosamine-1-phosphate uridyltransferase family. In the C-terminal section; belongs to the transferase hexapeptide repeat family. In terms of assembly, homotrimer. Requires Mg(2+) as cofactor.

It is found in the cytoplasm. It carries out the reaction alpha-D-glucosamine 1-phosphate + acetyl-CoA = N-acetyl-alpha-D-glucosamine 1-phosphate + CoA + H(+). The enzyme catalyses N-acetyl-alpha-D-glucosamine 1-phosphate + UTP + H(+) = UDP-N-acetyl-alpha-D-glucosamine + diphosphate. It functions in the pathway nucleotide-sugar biosynthesis; UDP-N-acetyl-alpha-D-glucosamine biosynthesis; N-acetyl-alpha-D-glucosamine 1-phosphate from alpha-D-glucosamine 6-phosphate (route II): step 2/2. The protein operates within nucleotide-sugar biosynthesis; UDP-N-acetyl-alpha-D-glucosamine biosynthesis; UDP-N-acetyl-alpha-D-glucosamine from N-acetyl-alpha-D-glucosamine 1-phosphate: step 1/1. It participates in bacterial outer membrane biogenesis; LPS lipid A biosynthesis. In terms of biological role, catalyzes the last two sequential reactions in the de novo biosynthetic pathway for UDP-N-acetylglucosamine (UDP-GlcNAc). The C-terminal domain catalyzes the transfer of acetyl group from acetyl coenzyme A to glucosamine-1-phosphate (GlcN-1-P) to produce N-acetylglucosamine-1-phosphate (GlcNAc-1-P), which is converted into UDP-GlcNAc by the transfer of uridine 5-monophosphate (from uridine 5-triphosphate), a reaction catalyzed by the N-terminal domain. This chain is Bifunctional protein GlmU, found in Streptococcus agalactiae serotype III (strain NEM316).